We begin with the raw amino-acid sequence, 368 residues long: Protein RecA (368 aa).

Residue 72–79 participates in ATP binding; that stretch reads GNESSGKT.

It belongs to the RecA family.

The protein resides in the cytoplasm. In terms of biological role, can catalyze the hydrolysis of ATP in the presence of single-stranded DNA, the ATP-dependent uptake of single-stranded DNA by duplex DNA, and the ATP-dependent hybridization of homologous single-stranded DNAs. It interacts with LexA causing its activation and leading to its autocatalytic cleavage. This Petrotoga mobilis (strain DSM 10674 / SJ95) protein is Protein RecA.